The sequence spans 154 residues: Large ribosomal subunit protein bL9 (154 aa).

The protein belongs to the bacterial ribosomal protein bL9 family.

In terms of biological role, binds to the 23S rRNA. This chain is Large ribosomal subunit protein bL9, found in Buchnera aphidicola subsp. Baizongia pistaciae (strain Bp).